The primary structure comprises 102 residues: Large ribosomal subunit protein uL24 (102 aa).

This sequence belongs to the universal ribosomal protein uL24 family. Part of the 50S ribosomal subunit.

In terms of biological role, one of two assembly initiator proteins, it binds directly to the 5'-end of the 23S rRNA, where it nucleates assembly of the 50S subunit. Functionally, one of the proteins that surrounds the polypeptide exit tunnel on the outside of the subunit. In Ralstonia nicotianae (strain ATCC BAA-1114 / GMI1000) (Ralstonia solanacearum), this protein is Large ribosomal subunit protein uL24.